A 199-amino-acid polypeptide reads, in one-letter code: Peroxiredoxin-1 (199 aa).

Positions 6 to 165 (AFIGKPAPDF…TLRLVQAFQF (160 aa)) constitute a Thioredoxin domain. The active-site Cysteine sulfenic acid (-SOH) intermediate is the Cys52.

The protein belongs to the peroxiredoxin family. AhpC/Prx1 subfamily. In terms of assembly, homodimer; disulfide-linked, upon oxidation. 5 homodimers assemble to form a ring-like decamer. Interacts with GDPD5; forms a mixed-disulfide with GDPD5. Interacts with SESN1 and SESN2. The enzyme can be inactivated by further oxidation of the cysteine sulfenic acid (C(P)-SOH) to sulphinic acid (C(P)-SO2H) instead of its condensation to a disulfide bond. It can be reactivated by forming a transient disulfide bond with sulfiredoxin SRXN1, which reduces the cysteine sulfinic acid in an ATP- and Mg-dependent manner.

It localises to the cytoplasm. The catalysed reaction is a hydroperoxide + [thioredoxin]-dithiol = an alcohol + [thioredoxin]-disulfide + H2O. Its function is as follows. Thiol-specific peroxidase that catalyzes the reduction of hydrogen peroxide and organic hydroperoxides to water and alcohols, respectively. Plays a role in cell protection against oxidative stress by detoxifying peroxides and as sensor of hydrogen peroxide-mediated signaling events. Might participate in the signaling cascades of growth factors and tumor necrosis factor-alpha by regulating the intracellular concentrations of H(2)O(2). Reduces an intramolecular disulfide bond in GDPD5 that gates the ability to GDPD5 to drive postmitotic motor neuron differentiation. The sequence is that of Peroxiredoxin-1 (PRDX1) from Gallus gallus (Chicken).